The sequence spans 42 residues: YAEGTFISDYSIAMDKIRQQDFVNWLLAQKGKKSDWIHNITQ.

The protein belongs to the glucagon family.

It localises to the secreted. Its function is as follows. Potent stimulator of insulin secretion and relatively poor inhibitor of gastric acid secretion. This Bos taurus (Bovine) protein is Gastric inhibitory polypeptide (GIP).